A 311-amino-acid chain; its full sequence is tRNA dimethylallyltransferase (311 aa).

12–19 (GPTASGKT) serves as a coordination point for ATP. 14-19 (TASGKT) contacts substrate. Interaction with substrate tRNA stretches follow at residues 37-40 (DSAL), 161-165 (QRINR), and 241-246 (RCVGYR).

This sequence belongs to the IPP transferase family. Monomer. Requires Mg(2+) as cofactor.

The enzyme catalyses adenosine(37) in tRNA + dimethylallyl diphosphate = N(6)-dimethylallyladenosine(37) in tRNA + diphosphate. Catalyzes the transfer of a dimethylallyl group onto the adenine at position 37 in tRNAs that read codons beginning with uridine, leading to the formation of N6-(dimethylallyl)adenosine (i(6)A). The chain is tRNA dimethylallyltransferase from Histophilus somni (strain 129Pt) (Haemophilus somnus).